We begin with the raw amino-acid sequence, 961 residues long: MPVSRSPIEDLANGFARRHIGPSPQEIAAMLRAVGAPSLDALMGETLPAAIRQAKPLDLGPALSEPEALAHMAELAAKNQVFTSLIGQGYYGTAMPTVIQRNILENPAWYTAYTPYQPEISQGRLEALFNFQTMICDLTGLDVANASLLDEGTAAAEAMALAERAMPKKTKAFFVDRDTHPQTLAVLRTRAEPLGWQIIVGDPVSDLQKADVFGALLQYPGSSGALRDPRPMIAALHAKGGLAVIAADLLALTLLASPGDLGADIAIGSAQRFGVPMGYGGPHAGFMAVRDSLKRALPGRIVGQSIDSHGQPAYRLALQTREQHIRREKATSNICTAQVLLAVLASMYAVYHGPEGLSAIARSIHRKTAVLAAGLRKLGFTTRNEAFFDTITVDVGDKQSEIIARARDENINLRIGDGTLGLSLDETTTPKIVEAVWRAFGGALSYAEIEPAMRDALHPTLKRTSPFMTQEVFHLYRSETELLRYMRKLSDRDLALDRAMIPLGSCTMKLNATTEMMPLSLPGFAHLHPFAPPEQALGYHALFDKLETWLAEITGYDAVSLQPNSGAQGEYAGLLAIRGYYKSRGEPHRKICLIPSSAHGTNPASAAMAGMEVVVVECNDRGDVDVDDLRARAELHSPNLAAVMITYPSTHGVFEEHIRDICDIVHAHGGQVYLDGANLNAQVGLARPGEYGADVSHINLHKTFAIPHGGGGPGMGPIGVKAHLAPFLPGHPCCDDTGPDGFSHGGGTVAAAPWGSASVLTISYVYILLMGGDGLKRATEVAILNANYVAAKLDPHFPVLYKNERGRVAHECIVDPRALKNSSGVTVDDIAKRLIDYGFHAPTMSFPVVGTLMIEPTESESKAELDRFCDAMIAIRREIAEIETGRWKVEQSPLRFAPHTVHDLAEDHWHRPYSRAIGCFPAGTARHDKYWCPVGRIDNVYGDRNLVCSCPPIEDYALAAE.

K702 is modified (N6-(pyridoxal phosphate)lysine).

This sequence belongs to the GcvP family. The glycine cleavage system is composed of four proteins: P, T, L and H. The cofactor is pyridoxal 5'-phosphate.

The enzyme catalyses N(6)-[(R)-lipoyl]-L-lysyl-[glycine-cleavage complex H protein] + glycine + H(+) = N(6)-[(R)-S(8)-aminomethyldihydrolipoyl]-L-lysyl-[glycine-cleavage complex H protein] + CO2. In terms of biological role, the glycine cleavage system catalyzes the degradation of glycine. The P protein binds the alpha-amino group of glycine through its pyridoxal phosphate cofactor; CO(2) is released and the remaining methylamine moiety is then transferred to the lipoamide cofactor of the H protein. The protein is Glycine dehydrogenase (decarboxylating) of Rhodopseudomonas palustris (strain BisA53).